The following is an 836-amino-acid chain: Enhancer of polycomb homolog 1 (836 aa).

Lys319 participates in a covalent cross-link: Glycyl lysine isopeptide (Lys-Gly) (interchain with G-Cter in SUMO2). Disordered regions lie at residues 335-360 (KRKY…SPAA) and 372-401 (YDFP…PDGP). Residues 346-360 (PSSAAATPQQTSPAA) show a composition bias toward low complexity. Ser539 carries the phosphoserine modification. A Glycyl lysine isopeptide (Lys-Gly) (interchain with G-Cter in SUMO2) cross-link involves residue Lys673. Positions 802-829 (VPSSSSVDSVPRENHESEKPALNNIADN) are disordered. A compositionally biased stretch (basic and acidic residues) spans 811–820 (VPRENHESEK).

Belongs to the enhancer of polycomb family. Component of the NuA4 histone acetyltransferase complex which contains the catalytic subunit KAT5/TIP60 and the subunits EP400, TRRAP/PAF400, BRD8/SMAP, EPC1, DMAP1/DNMAP1, RUVBL1/TIP49, RUVBL2, ING3, actin, ACTL6A/BAF53A, MORF4L1/MRG15, MORF4L2/MRGX, MRGBP, YEATS4/GAS41, VPS72/YL1 and MEAF6. KAT5/TIP60, EPC1, and ING3 together constitute a minimal HAT complex termed Piccolo NuA4. Component of a NuA4-related complex which contains EP400, TRRAP/PAF400, SRCAP, BRD8/SMAP, EPC1, DMAP1/DNMAP1, RUVBL1/TIP49, RUVBL2, actin, ACTL6A/BAF53A, VPS72 and YEATS4/GAS41. Interacts with TRIM27. Interacts with MBTD1; interaction is direct and promotes recruitment of MBTD1 into the NuA4 histone acetyltransferase complex.

It is found in the nucleus. It localises to the cytoplasm. Functionally, component of the NuA4 histone acetyltransferase (HAT) complex, a multiprotein complex involved in transcriptional activation of select genes principally by acetylation of nucleosomal histones H4 and H2A. The NuA4 complex plays a direct role in repair of DNA double-strand breaks (DSBs) by promoting homologous recombination (HR). The NuA4 complex is also required for spermatid development by promoting acetylation of histones: histone acetylation is required for histone replacement during the transition from round to elongating spermatids. In the NuA4 complex, EPC1 is required to recruit MBTD1 into the complex. In Homo sapiens (Human), this protein is Enhancer of polycomb homolog 1.